The following is a 288-amino-acid chain: Pantothenate synthetase (288 aa).

27–34 (MGALHEGH) contacts ATP. The active-site Proton donor is the His34. (R)-pantoate-binding residues include Gln58 and Gln150. Residue Gln58 participates in beta-alanine binding. ATP is bound by residues Leu173 and 181-184 (YSSR).

This sequence belongs to the pantothenate synthetase family. Homodimer.

Its subcellular location is the cytoplasm. The enzyme catalyses (R)-pantoate + beta-alanine + ATP = (R)-pantothenate + AMP + diphosphate + H(+). Its pathway is cofactor biosynthesis; (R)-pantothenate biosynthesis; (R)-pantothenate from (R)-pantoate and beta-alanine: step 1/1. Catalyzes the condensation of pantoate with beta-alanine in an ATP-dependent reaction via a pantoyl-adenylate intermediate. In Tropheryma whipplei (strain TW08/27) (Whipple's bacillus), this protein is Pantothenate synthetase.